The chain runs to 299 residues: Delta-9 desaturase-like 3 protein (299 aa).

Helical transmembrane passes span 38–57 and 58–76; these read AVGA…TWEA and FRFA…TFSY. The short motif at 77–82 is the Histidine box-1 element; that stretch reads HRNLTH. Residues 114–118 carry the Histidine box-2 motif; that stretch reads HRFHH. 2 helical membrane passes run 174–194 and 198–218; these read IGLH…LPYL and VGVG…ACHI. Positions 246–250 match the Histidine box-3 motif; the sequence is HNNHH. The helical transmembrane segment at 262–282 threads the bilayer; the sequence is WYQVDLTWYLIWFFQVLGLAT.

This sequence belongs to the fatty acid desaturase type 1 family. Requires Fe cation as cofactor.

It localises to the endoplasmic reticulum membrane. It functions in the pathway lipid metabolism; polyunsaturated fatty acid biosynthesis. The sequence is that of Delta-9 desaturase-like 3 protein from Arabidopsis thaliana (Mouse-ear cress).